The chain runs to 421 residues: Histidine--tRNA ligase (421 aa).

This sequence belongs to the class-II aminoacyl-tRNA synthetase family. As to quaternary structure, homodimer.

The protein resides in the cytoplasm. The enzyme catalyses tRNA(His) + L-histidine + ATP = L-histidyl-tRNA(His) + AMP + diphosphate + H(+). This chain is Histidine--tRNA ligase, found in Coxiella burnetii (strain CbuG_Q212) (Coxiella burnetii (strain Q212)).